We begin with the raw amino-acid sequence, 477 residues long: Protein nucleotidyltransferase YdiU (477 aa).

Residues Gly89, Gly91, Arg92, Lys112, Asp124, Gly125, Arg178, and Arg185 each coordinate ATP. Residue Asp257 is the Proton acceptor of the active site. Positions 258 and 267 each coordinate Mg(2+). Asp267 contributes to the ATP binding site.

It belongs to the SELO family. The cofactor is Mg(2+). Mn(2+) serves as cofactor.

It catalyses the reaction L-seryl-[protein] + ATP = 3-O-(5'-adenylyl)-L-seryl-[protein] + diphosphate. It carries out the reaction L-threonyl-[protein] + ATP = 3-O-(5'-adenylyl)-L-threonyl-[protein] + diphosphate. The catalysed reaction is L-tyrosyl-[protein] + ATP = O-(5'-adenylyl)-L-tyrosyl-[protein] + diphosphate. The enzyme catalyses L-histidyl-[protein] + UTP = N(tele)-(5'-uridylyl)-L-histidyl-[protein] + diphosphate. It catalyses the reaction L-seryl-[protein] + UTP = O-(5'-uridylyl)-L-seryl-[protein] + diphosphate. It carries out the reaction L-tyrosyl-[protein] + UTP = O-(5'-uridylyl)-L-tyrosyl-[protein] + diphosphate. Nucleotidyltransferase involved in the post-translational modification of proteins. It can catalyze the addition of adenosine monophosphate (AMP) or uridine monophosphate (UMP) to a protein, resulting in modifications known as AMPylation and UMPylation. The sequence is that of Protein nucleotidyltransferase YdiU from Synechocystis sp. (strain ATCC 27184 / PCC 6803 / Kazusa).